The following is a 290-amino-acid chain: 4-hydroxy-tetrahydrodipicolinate synthase (290 aa).

Pyruvate is bound at residue Thr-44. The active-site Proton donor/acceptor is the Tyr-132. The active-site Schiff-base intermediate with substrate is Lys-160. Ile-202 contacts pyruvate.

The protein belongs to the DapA family. In terms of assembly, homotetramer; dimer of dimers.

It localises to the cytoplasm. The catalysed reaction is L-aspartate 4-semialdehyde + pyruvate = (2S,4S)-4-hydroxy-2,3,4,5-tetrahydrodipicolinate + H2O + H(+). Its pathway is amino-acid biosynthesis; L-lysine biosynthesis via DAP pathway; (S)-tetrahydrodipicolinate from L-aspartate: step 3/4. Its function is as follows. Catalyzes the condensation of (S)-aspartate-beta-semialdehyde [(S)-ASA] and pyruvate to 4-hydroxy-tetrahydrodipicolinate (HTPA). The sequence is that of 4-hydroxy-tetrahydrodipicolinate synthase from Geobacter metallireducens (strain ATCC 53774 / DSM 7210 / GS-15).